We begin with the raw amino-acid sequence, 592 residues long: 1,4-alpha-glucan branching enzyme GlgB 2 (592 aa).

D274 (nucleophile) is an active-site residue. Catalysis depends on E327, which acts as the Proton donor.

It belongs to the glycosyl hydrolase 13 family. GlgB subfamily. In terms of assembly, monomer.

It catalyses the reaction Transfers a segment of a (1-&gt;4)-alpha-D-glucan chain to a primary hydroxy group in a similar glucan chain.. The protein operates within glycan biosynthesis; glycogen biosynthesis. Catalyzes the formation of the alpha-1,6-glucosidic linkages in glycogen by scission of a 1,4-alpha-linked oligosaccharide from growing alpha-1,4-glucan chains and the subsequent attachment of the oligosaccharide to the alpha-1,6 position. This Streptomyces avermitilis (strain ATCC 31267 / DSM 46492 / JCM 5070 / NBRC 14893 / NCIMB 12804 / NRRL 8165 / MA-4680) protein is 1,4-alpha-glucan branching enzyme GlgB 2.